Reading from the N-terminus, the 490-residue chain is Aspartyl/glutamyl-tRNA(Asn/Gln) amidotransferase subunit B (490 aa).

The protein belongs to the GatB/GatE family. GatB subfamily. In terms of assembly, heterotrimer of A, B and C subunits.

The enzyme catalyses L-glutamyl-tRNA(Gln) + L-glutamine + ATP + H2O = L-glutaminyl-tRNA(Gln) + L-glutamate + ADP + phosphate + H(+). It carries out the reaction L-aspartyl-tRNA(Asn) + L-glutamine + ATP + H2O = L-asparaginyl-tRNA(Asn) + L-glutamate + ADP + phosphate + 2 H(+). Allows the formation of correctly charged Asn-tRNA(Asn) or Gln-tRNA(Gln) through the transamidation of misacylated Asp-tRNA(Asn) or Glu-tRNA(Gln) in organisms which lack either or both of asparaginyl-tRNA or glutaminyl-tRNA synthetases. The reaction takes place in the presence of glutamine and ATP through an activated phospho-Asp-tRNA(Asn) or phospho-Glu-tRNA(Gln). In Methylobacterium nodulans (strain LMG 21967 / CNCM I-2342 / ORS 2060), this protein is Aspartyl/glutamyl-tRNA(Asn/Gln) amidotransferase subunit B.